The chain runs to 149 residues: UPF0178 protein Sama_3557 (149 aa).

The protein belongs to the UPF0178 family.

This Shewanella amazonensis (strain ATCC BAA-1098 / SB2B) protein is UPF0178 protein Sama_3557.